Consider the following 97-residue polypeptide: Acylphosphatase (97 aa).

An Acylphosphatase-like domain is found at 7–97; the sequence is RLTAWVHGHV…QERFEGFVER (91 aa). Catalysis depends on residues Arg-22 and Asn-40.

This sequence belongs to the acylphosphatase family.

The catalysed reaction is an acyl phosphate + H2O = a carboxylate + phosphate + H(+). The sequence is that of Acylphosphatase (acyP) from Mycobacterium avium (strain 104).